A 525-amino-acid chain; its full sequence is Cytochrome P450 714A2 (525 aa).

Residues 1–3 lie on the Lumenal side of the membrane; that stretch reads MES. A helical; Signal-anchor for type III membrane protein transmembrane segment spans residues 4 to 24; the sequence is LVVHTVNAIWCIVIVGIFSVG. At 25 to 525 the chain is on the cytoplasmic side; it reads YHVYGRAVVE…PQHGVVIRVV (501 aa). Heme is bound at residue Cys-475.

The protein belongs to the cytochrome P450 family. It depends on heme as a cofactor. As to expression, expressed in the shoot apical meristem (SAM) and petioles of young leaves, in the leaf margin and petiole vein of cotyledons, and at low levels in the filaments of developing flowers. Not detected in siliques.

The protein localises to the endoplasmic reticulum membrane. In terms of biological role, involved in the inactivation of early gibberellin (GA) intermediates. This Arabidopsis thaliana (Mouse-ear cress) protein is Cytochrome P450 714A2 (CYP714A2).